Consider the following 237-residue polypeptide: Ribosomal RNA small subunit methyltransferase G (237 aa).

S-adenosyl-L-methionine-binding positions include G78, F83, 129–130 (AE), and R148.

It belongs to the methyltransferase superfamily. RNA methyltransferase RsmG family.

The protein localises to the cytoplasm. Specifically methylates the N7 position of a guanine in 16S rRNA. The protein is Ribosomal RNA small subunit methyltransferase G of Streptococcus pyogenes serotype M4 (strain MGAS10750).